The primary structure comprises 610 residues: Glutamine--fructose-6-phosphate aminotransferase [isomerizing] (610 aa).

Residue Cys-2 is the Nucleophile; for GATase activity of the active site. Positions 2-219 (CGIVGAVAQR…EGDVAEITRR (218 aa)) constitute a Glutamine amidotransferase type-2 domain. SIS domains are found at residues 287 to 427 (ADEL…LRGM) and 459 to 600 (LAEG…VDQP). Residue Lys-605 is the For Fru-6P isomerization activity of the active site.

Homodimer.

The protein localises to the cytoplasm. It catalyses the reaction D-fructose 6-phosphate + L-glutamine = D-glucosamine 6-phosphate + L-glutamate. Its function is as follows. Catalyzes the first step in hexosamine metabolism, converting fructose-6P into glucosamine-6P using glutamine as a nitrogen source. This is Glutamine--fructose-6-phosphate aminotransferase [isomerizing] from Pectobacterium atrosepticum (strain SCRI 1043 / ATCC BAA-672) (Erwinia carotovora subsp. atroseptica).